The chain runs to 314 residues: tRNA pseudouridine synthase B (314 aa).

A substrate-binding site is contributed by H43. Residue D48 is the Nucleophile of the active site. Residues Y76, Y179, and L200 each coordinate substrate.

It belongs to the pseudouridine synthase TruB family. Type 1 subfamily.

It carries out the reaction uridine(55) in tRNA = pseudouridine(55) in tRNA. Functionally, responsible for synthesis of pseudouridine from uracil-55 in the psi GC loop of transfer RNAs. In Citrobacter koseri (strain ATCC BAA-895 / CDC 4225-83 / SGSC4696), this protein is tRNA pseudouridine synthase B.